The primary structure comprises 155 residues: NADPH-dependent 7-cyano-7-deazaguanine reductase (155 aa).

Cys53 functions as the Thioimide intermediate in the catalytic mechanism. The Proton donor role is filled by Asp60. Residues 75–77 and 94–95 contribute to the substrate site; these read VES and HE.

Belongs to the GTP cyclohydrolase I family. QueF type 1 subfamily.

The protein localises to the cytoplasm. The enzyme catalyses 7-aminomethyl-7-carbaguanine + 2 NADP(+) = 7-cyano-7-deazaguanine + 2 NADPH + 3 H(+). It participates in tRNA modification; tRNA-queuosine biosynthesis. Catalyzes the NADPH-dependent reduction of 7-cyano-7-deazaguanine (preQ0) to 7-aminomethyl-7-deazaguanine (preQ1). The polypeptide is NADPH-dependent 7-cyano-7-deazaguanine reductase (Ruegeria pomeroyi (strain ATCC 700808 / DSM 15171 / DSS-3) (Silicibacter pomeroyi)).